The following is a 446-amino-acid chain: tRNA modification GTPase MnmE (446 aa).

The (6S)-5-formyl-5,6,7,8-tetrahydrofolate site is built by R24, E81, and K120. The TrmE-type G domain maps to 216–368; sequence GLHAVLIGPP…LHIRLRELAL (153 aa). N226 contributes to the K(+) binding site. Residues 226–231, 245–251, and 270–273 each bind GTP; these read NAGKSS, TDVAGTT, and DTAG. Position 230 (S230) interacts with Mg(2+). The K(+) site is built by T245, V247, and T250. Mg(2+) is bound at residue T251. K446 contacts (6S)-5-formyl-5,6,7,8-tetrahydrofolate.

The protein belongs to the TRAFAC class TrmE-Era-EngA-EngB-Septin-like GTPase superfamily. TrmE GTPase family. Homodimer. Heterotetramer of two MnmE and two MnmG subunits. It depends on K(+) as a cofactor.

It is found in the cytoplasm. Functionally, exhibits a very high intrinsic GTPase hydrolysis rate. Involved in the addition of a carboxymethylaminomethyl (cmnm) group at the wobble position (U34) of certain tRNAs, forming tRNA-cmnm(5)s(2)U34. The polypeptide is tRNA modification GTPase MnmE (Xanthomonas oryzae pv. oryzae (strain KACC10331 / KXO85)).